The chain runs to 312 residues: Methionyl-tRNA formyltransferase (312 aa).

(6S)-5,6,7,8-tetrahydrofolate is bound at residue S107 to P110.

This sequence belongs to the Fmt family.

The enzyme catalyses L-methionyl-tRNA(fMet) + (6R)-10-formyltetrahydrofolate = N-formyl-L-methionyl-tRNA(fMet) + (6S)-5,6,7,8-tetrahydrofolate + H(+). Its function is as follows. Attaches a formyl group to the free amino group of methionyl-tRNA(fMet). The formyl group appears to play a dual role in the initiator identity of N-formylmethionyl-tRNA by promoting its recognition by IF2 and preventing the misappropriation of this tRNA by the elongation apparatus. This is Methionyl-tRNA formyltransferase from Endomicrobium trichonymphae.